The chain runs to 96 residues: Muconolactone Delta-isomerase (96 aa).

It belongs to the muconolactone Delta-isomerase family. As to quaternary structure, homodecamer.

The enzyme catalyses (S)-muconolactone = (4,5-dihydro-5-oxofuran-2-yl)-acetate. It participates in aromatic compound metabolism; beta-ketoadipate pathway; 5-oxo-4,5-dihydro-2-furylacetate from catechol: step 3/3. In Pseudomonas putida (Arthrobacter siderocapsulatus), this protein is Muconolactone Delta-isomerase (catC).